Reading from the N-terminus, the 415-residue chain is Procollagen C-endopeptidase enhancer 2 (415 aa).

The first 23 residues, 1-23 (MRGANAWAPLCLLLAAATQLSRQ), serve as a signal peptide directing secretion. Cystine bridges form between Cys-33-Cys-59, Cys-86-Cys-107, Cys-154-Cys-181, Cys-208-Cys-231, Cys-297-Cys-364, Cys-301-Cys-367, and Cys-312-Cys-415. 2 CUB domains span residues 33 to 144 (CGGI…FSAA) and 154 to 268 (CGGL…YIFR). Residues 297–415 (CQQKCRRTGT…LLDALKNKQC (119 aa)) form the NTR domain. Residue Asn-355 is glycosylated (N-linked (GlcNAc...) asparagine).

As to quaternary structure, interacts with heparin with high affinity, and type I or II collagen. In terms of processing, O-glycosylated; contains sialic acid. In terms of tissue distribution, highly expressed in the heart, trabecular meshwork, pituitary gland, bladder, mammary gland, trachea and placenta and weakly expressed in the brain. Expressed in cartilage.

Its subcellular location is the secreted. Functionally, binds to the C-terminal propeptide of types I and II procollagens and may enhance the cleavage of that propeptide by BMP1. The protein is Procollagen C-endopeptidase enhancer 2 (PCOLCE2) of Homo sapiens (Human).